The following is a 479-amino-acid chain: Cardiolipin synthase A (479 aa).

2 consecutive transmembrane segments (helical) span residues 8–28 (FFGY…IHAL) and 38–58 (IAWA…YLVF). PLD phosphodiesterase domains lie at 218–245 (INFR…GDEY) and 392–419 (EPGF…DNRS). Residues H223, K225, D230, H397, K399, and D404 contribute to the active site.

The protein belongs to the phospholipase D family. Cardiolipin synthase subfamily. ClsA sub-subfamily.

It localises to the cell inner membrane. It carries out the reaction 2 a 1,2-diacyl-sn-glycero-3-phospho-(1'-sn-glycerol) = a cardiolipin + glycerol. Its function is as follows. Catalyzes the reversible phosphatidyl group transfer from one phosphatidylglycerol molecule to another to form cardiolipin (CL) (diphosphatidylglycerol) and glycerol. This chain is Cardiolipin synthase A, found in Pseudomonas syringae pv. syringae (strain B728a).